We begin with the raw amino-acid sequence, 459 residues long: Phosphoglucosamine mutase (459 aa).

Serine 112 functions as the Phosphoserine intermediate in the catalytic mechanism. 4 residues coordinate Mg(2+): serine 112, aspartate 249, aspartate 251, and aspartate 253. Serine 112 is modified (phosphoserine).

The protein belongs to the phosphohexose mutase family. The cofactor is Mg(2+). Post-translationally, activated by phosphorylation.

It catalyses the reaction alpha-D-glucosamine 1-phosphate = D-glucosamine 6-phosphate. In terms of biological role, catalyzes the conversion of glucosamine-6-phosphate to glucosamine-1-phosphate. In Synechococcus sp. (strain RCC307), this protein is Phosphoglucosamine mutase.